We begin with the raw amino-acid sequence, 34 residues long: uncharacterized protein (34 aa).

Residues 10–30 (LIITSSFFAIAVVLVLSVLLI) form a helical membrane-spanning segment.

The protein localises to the membrane. This is an uncharacterized protein from Shigella flexneri.